A 1222-amino-acid polypeptide reads, in one-letter code: ATP-dependent helicase/nuclease subunit A (1222 aa).

The UvrD-like helicase ATP-binding domain maps to 39-495 (QKRTAQQIEA…ILLKENFRSQ (457 aa)). 60-67 (ASAGSGKT) is an ATP binding site. In terms of domain architecture, UvrD-like helicase C-terminal spans 524–810 (QLIAGSHAQT…NLMTIHKSKG (287 aa)).

It belongs to the helicase family. AddA subfamily. Heterodimer of AddA and AddB/RexB. It depends on Mg(2+) as a cofactor.

It catalyses the reaction Couples ATP hydrolysis with the unwinding of duplex DNA by translocating in the 3'-5' direction.. The catalysed reaction is ATP + H2O = ADP + phosphate + H(+). The heterodimer acts as both an ATP-dependent DNA helicase and an ATP-dependent, dual-direction single-stranded exonuclease. Recognizes the chi site generating a DNA molecule suitable for the initiation of homologous recombination. The AddA nuclease domain is required for chi fragment generation; this subunit has the helicase and 3' -&gt; 5' nuclease activities. This Streptococcus pyogenes serotype M4 (strain MGAS10750) protein is ATP-dependent helicase/nuclease subunit A.